We begin with the raw amino-acid sequence, 156 residues long: uncharacterized protein (156 aa).

Residues 1 to 12 (MSSRFARSNGNP) are compositionally biased toward polar residues. The tract at residues 1–27 (MSSRFARSNGNPNHIRKRNHSPDPIGI) is disordered. A Phosphoserine modification is found at Ser21.

It is found in the cytoplasm. Its subcellular location is the nucleus. This is an uncharacterized protein from Saccharomyces cerevisiae (strain ATCC 204508 / S288c) (Baker's yeast).